A 123-amino-acid chain; its full sequence is Small ribosomal subunit protein uS12 (123 aa).

3-methylthioaspartic acid is present on aspartate 89.

The protein belongs to the universal ribosomal protein uS12 family. As to quaternary structure, part of the 30S ribosomal subunit. Contacts proteins S8 and S17. May interact with IF1 in the 30S initiation complex.

Its function is as follows. With S4 and S5 plays an important role in translational accuracy. In terms of biological role, interacts with and stabilizes bases of the 16S rRNA that are involved in tRNA selection in the A site and with the mRNA backbone. Located at the interface of the 30S and 50S subunits, it traverses the body of the 30S subunit contacting proteins on the other side and probably holding the rRNA structure together. The combined cluster of proteins S8, S12 and S17 appears to hold together the shoulder and platform of the 30S subunit. The sequence is that of Small ribosomal subunit protein uS12 from Caulobacter sp. (strain K31).